We begin with the raw amino-acid sequence, 547 residues long: Chaperonin GroEL (547 aa).

ATP-binding positions include 30 to 33 (TLGP), Lys51, 87 to 91 (DGTTT), Gly415, 479 to 481 (NAA), and Asp495.

This sequence belongs to the chaperonin (HSP60) family. As to quaternary structure, forms a cylinder of 14 subunits composed of two heptameric rings stacked back-to-back. Interacts with the co-chaperonin GroES.

The protein localises to the cytoplasm. The enzyme catalyses ATP + H2O + a folded polypeptide = ADP + phosphate + an unfolded polypeptide.. In terms of biological role, together with its co-chaperonin GroES, plays an essential role in assisting protein folding. The GroEL-GroES system forms a nano-cage that allows encapsulation of the non-native substrate proteins and provides a physical environment optimized to promote and accelerate protein folding. This is Chaperonin GroEL from Cupriavidus metallidurans (strain ATCC 43123 / DSM 2839 / NBRC 102507 / CH34) (Ralstonia metallidurans).